Consider the following 315-residue polypeptide: MGKRAKITVVGAGHVGEHVAMFCAIKELGDVVLIDIVEDMPQGKALDMFEATPLEGWDSRIVGTNDYADTADSDIVVITAGSPRKPGMSRDDLLEINAKIIKAVTEQVAKYSPNAVIIVVTNPLDAMTQLAWNVSGFPKNRVLGQAGNLDSARFRAFIAMELGVSVKEISAMVLGGHGDDMVPLPRFTTVSGIPITELIPPDRIEALVQRTRVGGGEIVKLLKTGSAYYAPALATVEMVEAILKDQKRIQPCAALCEGEYGINGVYCGVPCLLGANGVEKIIELKLTDDELKALQASAGRVKGLIDKLTEWGYIK.

NAD(+) contacts are provided by residues 11 to 16 (GAGHVG) and Asp-35. Substrate is bound by residues Arg-84 and Arg-90. NAD(+) is bound by residues Asn-97 and 120-122 (VTN). Substrate contacts are provided by Asn-122 and Arg-153. His-177 acts as the Proton acceptor in catalysis.

It belongs to the LDH/MDH superfamily. MDH type 3 family.

It catalyses the reaction (S)-malate + NAD(+) = oxaloacetate + NADH + H(+). Its function is as follows. Catalyzes the reversible oxidation of malate to oxaloacetate. The sequence is that of Malate dehydrogenase from Thermosulfidibacter takaii (strain DSM 17441 / JCM 13301 / NBRC 103674 / ABI70S6).